Here is a 206-residue protein sequence, read N- to C-terminus: Large ribosomal subunit protein bL25 (206 aa).

It belongs to the bacterial ribosomal protein bL25 family. CTC subfamily. Part of the 50S ribosomal subunit; part of the 5S rRNA/L5/L18/L25 subcomplex. Contacts the 5S rRNA. Binds to the 5S rRNA independently of L5 and L18.

This is one of the proteins that binds to the 5S RNA in the ribosome where it forms part of the central protuberance. The sequence is that of Large ribosomal subunit protein bL25 from Bartonella henselae (strain ATCC 49882 / DSM 28221 / CCUG 30454 / Houston 1) (Rochalimaea henselae).